A 155-amino-acid polypeptide reads, in one-letter code: NADPH-dependent 7-cyano-7-deazaguanine reductase (155 aa).

Residue C53 is the Thioimide intermediate of the active site. D60 (proton donor) is an active-site residue. Residues 75-77 and 94-95 each bind substrate; these read VES and HE.

This sequence belongs to the GTP cyclohydrolase I family. QueF type 1 subfamily.

It is found in the cytoplasm. It carries out the reaction 7-aminomethyl-7-carbaguanine + 2 NADP(+) = 7-cyano-7-deazaguanine + 2 NADPH + 3 H(+). It participates in tRNA modification; tRNA-queuosine biosynthesis. Catalyzes the NADPH-dependent reduction of 7-cyano-7-deazaguanine (preQ0) to 7-aminomethyl-7-deazaguanine (preQ1). The protein is NADPH-dependent 7-cyano-7-deazaguanine reductase of Brucella anthropi (strain ATCC 49188 / DSM 6882 / CCUG 24695 / JCM 21032 / LMG 3331 / NBRC 15819 / NCTC 12168 / Alc 37) (Ochrobactrum anthropi).